Reading from the N-terminus, the 313-residue chain is Tyrosine--tRNA ligase (313 aa).

Tyrosine 32 is a binding site for L-tyrosine. Residues 37–45 carry the 'HIGH' region motif; the sequence is PSGEIHLGH. Residues tyrosine 152, glutamine 156, aspartate 159, and glutamine 174 each contribute to the L-tyrosine site. Positions 208-212 match the 'KMSKS' region motif; that stretch reads KMSSS. Serine 211 provides a ligand contact to ATP.

It belongs to the class-I aminoacyl-tRNA synthetase family. TyrS type 3 subfamily. In terms of assembly, homodimer.

The protein localises to the cytoplasm. It catalyses the reaction tRNA(Tyr) + L-tyrosine + ATP = L-tyrosyl-tRNA(Tyr) + AMP + diphosphate + H(+). Catalyzes the attachment of tyrosine to tRNA(Tyr) in a two-step reaction: tyrosine is first activated by ATP to form Tyr-AMP and then transferred to the acceptor end of tRNA(Tyr). This Methanospirillum hungatei JF-1 (strain ATCC 27890 / DSM 864 / NBRC 100397 / JF-1) protein is Tyrosine--tRNA ligase.